We begin with the raw amino-acid sequence, 102 residues long: Thioredoxin (102 aa).

Positions 2–102 (VTEIRSLKQL…KTKIIDLFNN (101 aa)) constitute a Thioredoxin domain. A disulfide bridge links Cys-30 with Cys-33.

The protein belongs to the thioredoxin family.

Functionally, participates in various redox reactions through the reversible oxidation of its active center dithiol to a disulfide and catalyzes dithiol-disulfide exchange reactions. The polypeptide is Thioredoxin (trxA) (Mycoplasma genitalium (strain ATCC 33530 / DSM 19775 / NCTC 10195 / G37) (Mycoplasmoides genitalium)).